Consider the following 382-residue polypeptide: Lipid-A-disaccharide synthase (382 aa).

Belongs to the LpxB family.

It carries out the reaction 2-N,3-O-bis[(3R)-3-hydroxytetradecanoyl]-alpha-D-glucosaminyl 1-phosphate + UDP-2-N,3-O-bis[(3R)-3-hydroxytetradecanoyl]-alpha-D-glucosamine = lipid A disaccharide (E. coli) + UDP + H(+). The enzyme catalyses a lipid X + a UDP-2-N,3-O-bis[(3R)-3-hydroxyacyl]-alpha-D-glucosamine = a lipid A disaccharide + UDP + H(+). It functions in the pathway glycolipid biosynthesis; lipid IV(A) biosynthesis; lipid IV(A) from (3R)-3-hydroxytetradecanoyl-[acyl-carrier-protein] and UDP-N-acetyl-alpha-D-glucosamine: step 5/6. Functionally, condensation of UDP-2,3-diacylglucosamine and 2,3-diacylglucosamine-1-phosphate to form lipid A disaccharide, a precursor of lipid A, a phosphorylated glycolipid that anchors the lipopolysaccharide to the outer membrane of the cell. In Escherichia coli (strain SMS-3-5 / SECEC), this protein is Lipid-A-disaccharide synthase.